Here is a 491-residue protein sequence, read N- to C-terminus: (R)-citramalate synthase CimA (491 aa).

One can recognise a Pyruvate carboxyltransferase domain in the interval 3 to 254; sequence VRIFDTTLRD…DTKIKMEKLY (252 aa).

Belongs to the alpha-IPM synthase/homocitrate synthase family. Homodimer.

It carries out the reaction pyruvate + acetyl-CoA + H2O = (3R)-citramalate + CoA + H(+). It participates in amino-acid biosynthesis; L-isoleucine biosynthesis; 2-oxobutanoate from pyruvate: step 1/3. In terms of biological role, catalyzes the condensation of pyruvate and acetyl-coenzyme A to form (R)-citramalate. This Methanocaldococcus jannaschii (strain ATCC 43067 / DSM 2661 / JAL-1 / JCM 10045 / NBRC 100440) (Methanococcus jannaschii) protein is (R)-citramalate synthase CimA (cimA).